The primary structure comprises 78 residues: Small integral membrane protein 10-like protein 2A (78 aa).

The polypeptide is Small integral membrane protein 10-like protein 2A (Homo sapiens (Human)).